Here is a 235-residue protein sequence, read N- to C-terminus: Urease accessory protein UreF (235 aa).

The protein belongs to the UreF family. As to quaternary structure, ureD, UreF and UreG form a complex that acts as a GTP-hydrolysis-dependent molecular chaperone, activating the urease apoprotein by helping to assemble the nickel containing metallocenter of UreC. The UreE protein probably delivers the nickel.

It is found in the cytoplasm. Its function is as follows. Required for maturation of urease via the functional incorporation of the urease nickel metallocenter. The protein is Urease accessory protein UreF of Psychrobacter cryohalolentis (strain ATCC BAA-1226 / DSM 17306 / VKM B-2378 / K5).